The chain runs to 575 residues: Urease subunit alpha (575 aa).

In terms of domain architecture, Urease spans 137-575; the sequence is GGIDSHIHWI…LPMAQRYFLF (439 aa). Ni(2+)-binding residues include H142, H144, and K225. K225 carries the N6-carboxylysine modification. H227 contributes to the substrate binding site. The Ni(2+) site is built by H254 and H280. H328 functions as the Proton donor in the catalytic mechanism. D368 provides a ligand contact to Ni(2+).

Belongs to the metallo-dependent hydrolases superfamily. Urease alpha subunit family. As to quaternary structure, heterotrimer of UreA (gamma), UreB (beta) and UreC (alpha) subunits. Three heterotrimers associate to form the active enzyme. Requires Ni cation as cofactor. Post-translationally, carboxylation allows a single lysine to coordinate two nickel ions.

It localises to the cytoplasm. The enzyme catalyses urea + 2 H2O + H(+) = hydrogencarbonate + 2 NH4(+). The protein operates within nitrogen metabolism; urea degradation; CO(2) and NH(3) from urea (urease route): step 1/1. This is Urease subunit alpha from Leptothrix cholodnii (strain ATCC 51168 / LMG 8142 / SP-6) (Leptothrix discophora (strain SP-6)).